The chain runs to 227 residues: A-type potassium channel modulatory protein KCNIP1 (227 aa).

In terms of domain architecture, EF-hand 1; degenerate spans 38 to 94 (LEMTMVCHRPEGLEQLEAQTNFTKRELQVLYRGFKNECPSGVVNEDTFKQIYAQFFP). 3 consecutive EF-hand domains span residues 97 to 132 (DAST…LLRG), 133 to 168 (TVHE…IYDM), and 181 to 216 (TPRQ…DDNI). Residues D146, N148, D150, Y152, E157, D194, N196, D198, and E205 each contribute to the Ca(2+) site. Residues 214-227 (DNIMRSLQLFQNVM) are interaction with KCND2.

It belongs to the recoverin family. Component of heteromultimeric potassium channels. Identified in potassium channel complexes containing KCND1, KCND2, KCND3, KCNIP1, KCNIP2, KCNIP3, KCNIP4, DPP6 and DPP10. Part of a heterooctamer composed of the tetrameric channel and four KCNIP1 chains. Probably part of a complex consisting of KCNIP1, KCNIP2 isoform 3 and KCND2. Self-associates to form homodimers and homotetramers. Interacts with KCNIP2 isoform 3 in a calcium-dependent manner. Interacts with Naja atra venom CTX3. Interacts with KCND2; this interaction mediates the capture of both the N- and C-terminus of KCND2, thus preventing KCND2 N-type inactivation and modulates the channel gating kinetics. Interacts with KCND3; each KCNIP1 monomer interacts with two adjacent KCND3 subunits, through both the N-terminal inactivation ball of a KCND3 subunit and a C-terminal helix from the adjacent KCND3 subunit, clamping them together; this interaction stabilizes the tetrameric form and modulates the channel gating kinetics namely channel activation and inactivation kinetics and rate of recovery from inactivation. Isoform 1 and isoform 2 are expressed in brain and kidney. Isoform 1 is also expressed in liver, pancreas, skeletal muscle, small intestine and testis. Isoform 2 is also expressed in lung, pancreas, leukocytes, prostate and thymus.

The protein resides in the cell membrane. The protein localises to the cytoplasm. It localises to the cell projection. Its subcellular location is the dendrite. In terms of biological role, regulatory subunit of Kv4/D (Shal)-type voltage-gated rapidly inactivating A-type potassium channels. Regulates channel density, inactivation kinetics and rate of recovery from inactivation in a calcium-dependent and isoform-specific manner. In vitro, modulates KCND1/Kv4.1 and KCND2/Kv4.2 currents. Increases the presence of KCND2 at the cell surface. In Homo sapiens (Human), this protein is A-type potassium channel modulatory protein KCNIP1.